Consider the following 565-residue polypeptide: MSHEFDYIIIGAGSAGNVLATRLTEDADVSVLLLEAGGPDYRLDFRTQMPAALAFPLQGRRYNWAYETDPEPHMNNRRMECGRGKGLGGSSLINGMCYIRGNALDFDNWAKAKGLEDWTYHDCLPYFRKAESRDIGPNDYHGGDGPVSVTTPKAGNNPLFHAMVEAGVQAGYPRTDDLNGYQQEGFGPMDRTVTPQGRRASTARGYLDQARERPNLTIVTHATTDRILFDGKRASGVSYLIGNANDATEARARREVLLCAGAIASPQILQRSGVGPAALLRELDIALVHELPGVGQNLQDHLEMYLQYACTQPVSLYPALKLLNQPGIGAQWLFTGNGIGASNQFEAGGFIRTRPEFAWPNIQFHFLPVAINYNGSNAVNEHGFQAHVGSMRSPSRGRIQLKSKDPRQHPSILFNYMSHEQDWQEFRDAIRITREIMAQPALDSYRGREISPGIDCQSDAELDAFIREHAETAFHPSCSCKMGEDDMAVVDGQGRVHGVQGLRVVDASIMPEIITGNLNATTIMMAEKIADRIRDRQPLPRSNAPYFVAGERPVRGQPQRAVSAA.

6 to 35 is a binding site for FAD; that stretch reads DYIIIGAGSAGNVLATRLTEDADVSVLLLE. The active-site Proton acceptor is the His475. Residues 541–565 are disordered; the sequence is RSNAPYFVAGERPVRGQPQRAVSAA.

It belongs to the GMC oxidoreductase family. Requires FAD as cofactor.

The catalysed reaction is choline + A = betaine aldehyde + AH2. It carries out the reaction betaine aldehyde + NAD(+) + H2O = glycine betaine + NADH + 2 H(+). It participates in amine and polyamine biosynthesis; betaine biosynthesis via choline pathway; betaine aldehyde from choline (cytochrome c reductase route): step 1/1. In terms of biological role, involved in the biosynthesis of the osmoprotectant glycine betaine. Catalyzes the oxidation of choline to betaine aldehyde and betaine aldehyde to glycine betaine at the same rate. The chain is Oxygen-dependent choline dehydrogenase from Ectopseudomonas mendocina (strain ymp) (Pseudomonas mendocina).